A 270-amino-acid polypeptide reads, in one-letter code: NAD kinase (270 aa).

Residue aspartate 45 is the Proton acceptor of the active site. NAD(+) is bound by residues 45 to 46, 121 to 122, arginine 147, aspartate 149, 160 to 165, and alanine 184; these read DG, NE, and TAYSKS.

It belongs to the NAD kinase family. A divalent metal cation serves as cofactor.

Its subcellular location is the cytoplasm. The enzyme catalyses NAD(+) + ATP = ADP + NADP(+) + H(+). In terms of biological role, involved in the regulation of the intracellular balance of NAD and NADP, and is a key enzyme in the biosynthesis of NADP. Catalyzes specifically the phosphorylation on 2'-hydroxyl of the adenosine moiety of NAD to yield NADP. The protein is NAD kinase of Lactobacillus helveticus (strain DPC 4571).